Reading from the N-terminus, the 273-residue chain is Medium-wave-sensitive opsin 1 (273 aa).

The Extracellular portion of the chain corresponds to 1-5 (APRWV). Residues 6-30 (YHLTSAWMVFVVIASVFTNGLVLAA) form a helical membrane-spanning segment. The Cytoplasmic portion of the chain corresponds to 31–42 (TMRFKKLRHPLN). The chain crosses the membrane as a helical span at residues 43–68 (WILVNLAIADLVETIIASTISVVNQM). Residues 69 to 82 (YGYFVLGHPLCVVE) lie on the Extracellular side of the membrane. Cys-79 and Cys-156 form a disulfide bridge. A helical transmembrane segment spans residues 83 to 102 (GYTASLCGITGLWSLAIISW). Residues 103–121 (ERWMVVCRPFGNVRFDAKL) are Cytoplasmic-facing. A helical transmembrane segment spans residues 122–145 (AIAGIAFSWIWAAVWTAPPIFGWS). Over 146 to 171 (RYWPHGLKTSCGPDVFSGSSYPGVQS) the chain is Extracellular. Residues 172–199 (YMIVLMITCCFIPLSVIVLCYLQVWLAI) traverse the membrane as a helical segment. The Cytoplasmic segment spans residues 200 to 221 (RAVAKQQKESESTQKAEKEVTR). A helical membrane pass occupies residues 222–245 (MVMVMIFAFCLCWGPYAFFACFAA). Residues 246–253 (AHPGYAFH) are Extracellular-facing. A helical membrane pass occupies residues 254 to 273 (PLVAALPAYFAKSATIYNPI). Lys-265 is subject to N6-(retinylidene)lysine.

Belongs to the G-protein coupled receptor 1 family. Opsin subfamily. In terms of assembly, monomer. Homodimer. Homotetramer. Post-translationally, O-glycosylated. In terms of processing, phosphorylated on some or all of the serine and threonine residues present in the C-terminal region. In terms of tissue distribution, the three color pigments are found in the cone photoreceptor cells.

It is found in the membrane. Visual pigments are the light-absorbing molecules that mediate vision. They consist of an apoprotein, opsin, covalently linked to cis-retinal. The sequence is that of Medium-wave-sensitive opsin 1 (OPN1MW) from Odocoileus virginianus virginianus (Virginia white-tailed deer).